Here is a 517-residue protein sequence, read N- to C-terminus: MPFNGEKQCVSEDQQSDSESSRFAEGVASLSDYECSRQSFTSDSSSKSSSPASTSPPRGLMFDDVMAAAKNLSDMTLAHEIAVNENFQLKQNALPENSLAGQVKRVVHQAFWDVLEADLSAEPPQYEYAIKLFEEIREILLSFLTPGGNRLHSQICEVLDIDLIRQQAEHSAVDIQGLANYVITTMGKICAPVRDEDIRELKATTNIVEMLRQIFRVLDLMRMDMMNFVIRNIRPHIQHHLVEYERNKFQEVVEETPNALSQTTEWLKESIDKELLSETDVAPAAEHSSTPSLSPLLVLNNCYLKLLQWDYQKKVLPETLMTDGPRLQELSEKLNQLKMTACVALITNNMVGAVTEGLPELANRLKRISAVLLEGMNKETFNLKEALHSIGVQTCAEVNKALEERGSPTLNAEVQANLVGQLSSLEEKDNPVCTLMDKRIQLYMKGLLCLPSTQKSMPPVPGGLDVIQRELEVLGCQYANIVNLNKQVYGPFYANIFRKLLFRDEAVGKIDASLPTN.

The tract at residues 1 to 59 (MPFNGEKQCVSEDQQSDSESSRFAEGVASLSDYECSRQSFTSDSSSKSSSPASTSPPRG) is disordered. The residue at position 16 (Ser16) is a Phosphoserine. Over residues 36-55 (SRQSFTSDSSSKSSSPASTS) the composition is skewed to low complexity.

Belongs to the TCP11 family. In terms of assembly, interacts with FMNL2; this interaction promotes muscle-derived satellite cell (MDSC) migration and differentiation.

The protein resides in the cytoplasm. The protein localises to the cytoskeleton. In terms of biological role, promotes the migration of muscle-derived satellite cells (MDSCs) during differentiation throught interaction with FMNL2 and therefore may participate in microfilament assembly. The chain is T-complex protein 11-like protein 2 from Mus musculus (Mouse).